A 593-amino-acid polypeptide reads, in one-letter code: La-related protein 7 (593 aa).

The span at 1–11 (MTAIETDTPSN) shows a compositional bias: polar residues. The interval 1–28 (MTAIETDTPSNKVKEDESTDLRKDREKK) is disordered. Residues 12 to 24 (KVKEDESTDLRKD) are compositionally biased toward basic and acidic residues. An HTH La-type RNA-binding domain is found at 30–121 (RSRVKQLLAD…RRRFPLGEKP (92 aa)). The 79-residue stretch at 127 to 205 (RTVYVELLPK…PRKAGMFPKT (79 aa)) folds into the RRM domain. The interval 191–363 (PPEEAPRKAG…STEEEKDAVD (173 aa)) is disordered. Positions 231 to 240 (KKKKKKKSKA) are enriched in basic residues. Over residues 248–259 (AEEDTKEQDMDI) the composition is skewed to acidic residues. 3 stretches are compositionally biased toward basic and acidic residues: residues 295–307 (ERAE…EKVR), 314–340 (SSSE…DEKP), and 348–363 (QECK…DAVD). The xRRM domain occupies 461 to 574 (QFVCGVIGKI…TEKLIAKAEK (114 aa)).

This sequence belongs to the LARP7 family. In terms of assembly, core component of the 7SK RNP complex. Associates with box C/D small nucleolar ribonucleoprotein (snoRNP) complexes.

The protein localises to the nucleus. It localises to the nucleoplasm. RNA-binding protein that specifically binds distinct small nuclear RNA (snRNAs) and regulates their processing and function. Specifically binds the 7SK snRNA (7SK RNA) and acts as a core component of the 7SK ribonucleoprotein (RNP) complex, thereby acting as a negative regulator of transcription elongation by RNA polymerase II. The 7SK RNP complex sequesters the positive transcription elongation factor b (P-TEFb) in a large inactive 7SK RNP complex preventing RNA polymerase II phosphorylation and subsequent transcriptional elongation. The 7SK RNP complex also promotes snRNA gene transcription by RNA polymerase II via interaction with the little elongation complex (LEC). LARP7 specifically binds to the highly conserved 3'-terminal U-rich stretch of 7SK RNA; on stimulation, remains associated with 7SK RNA, whereas P-TEFb is released from the complex. LARP7 also acts as a regulator of mRNA splicing fidelity by promoting U6 snRNA processing. Specifically binds U6 snRNAs and associates with a subset of box C/D RNP complexes: promotes U6 snRNA 2'-O-methylation by facilitating U6 snRNA loading into box C/D RNP complexes. U6 snRNA 2'-O-methylation is required for mRNA splicing fidelity. In Xenopus tropicalis (Western clawed frog), this protein is La-related protein 7.